A 582-amino-acid chain; its full sequence is Putative transcriptional regulator HVO_1357 (582 aa).

Residues V19 to L129 enclose the Response regulatory domain. 4-aspartylphosphate is present on D67. A coiled-coil region spans residues L165–V203. In terms of domain architecture, HTH bat-type spans L517–E569.

Its function is as follows. May be part of a signal-dependent gene regulation cascade that is relevant to swimming motility. May be involved in the transcription regulation of target genes. This Haloferax volcanii (strain ATCC 29605 / DSM 3757 / JCM 8879 / NBRC 14742 / NCIMB 2012 / VKM B-1768 / DS2) (Halobacterium volcanii) protein is Putative transcriptional regulator HVO_1357.